The primary structure comprises 128 residues: Holo-[acyl-carrier-protein] synthase (128 aa).

The Mg(2+) site is built by Asp8 and Glu59.

Belongs to the P-Pant transferase superfamily. AcpS family. It depends on Mg(2+) as a cofactor.

It is found in the cytoplasm. It carries out the reaction apo-[ACP] + CoA = holo-[ACP] + adenosine 3',5'-bisphosphate + H(+). In terms of biological role, transfers the 4'-phosphopantetheine moiety from coenzyme A to a Ser of acyl-carrier-protein. The polypeptide is Holo-[acyl-carrier-protein] synthase (Rickettsia typhi (strain ATCC VR-144 / Wilmington)).